The following is a 184-amino-acid chain: Ribosome-recycling factor (184 aa).

It belongs to the RRF family.

The protein resides in the cytoplasm. Its function is as follows. Responsible for the release of ribosomes from messenger RNA at the termination of protein biosynthesis. May increase the efficiency of translation by recycling ribosomes from one round of translation to another. This chain is Ribosome-recycling factor, found in Borrelia hermsii (strain HS1 / DAH).